The following is a 2431-amino-acid chain: MNIPKVTTSLGAAEKAKPERVASVAAAAFNAVSLQKRSGDDTATPAEDPTRKKAKTELLLGTGTAAPSLPAKASSTAPQQLLYQRSGQQAKAQVKAASEPQDVETADGVWDARDQQIIVCNFGSGTEMGAIKAEDADKQSEYRISTPRNSQSNPLLHRNTAFTSFTKKEGASSSASSSSSTASVISIEPSGSGQDHAENSGKSEDLDYVLMPASGADSSTSVGNSTGTGTPAGTPIGATTSTIILNANNGTAGVSGAGTTTILTQKSGHTNYNIFNTTATGSQTPTTTLLNRVNLHPKMKTQLMVNAKKLSEVTQTTAKVSIGNKTISVPLLKPLMSASGAATAGGATIVESKQLLQPGGQVTTVMSAAQQSGGQQVHPHVHSHAHHNFTKLIKRGPKNSGTIVSFSGLQIKPANTKIVATKVVSKKMLQLQQHQQQIQQQQQLQQLQVTSGGGLAPPTGSIVTITTTNPSQTYAMVQDSATVGPAAHSEDDAPAPRKITAYSENLQKILNKSKSQESTGGPEEFTNINSVVIKPLDKNTLNCPPSFNIFKQQQHSQAAQSQSISAVGSGAGTPVTFTMASGNASDLATTSTVSVSAGTICINSPMMGTRPIISIQNKNISLVLSKTTMAQQKPKMITTTTLSSQAALQMHHALIQDSSADKAGSSANSGSATSGASMQLKLTTANTPTKLSVSLAPDVVKLEEVGSESKAKLLVKQEAVVKDSTGTPTSEERAEEIGTPEKRLNANATMTAINQVQNQSANQIQMATSTSTASNPSTPNPTVNATPMNNQRSAAEDNALLKQLLQNNSSSHSLNQISITSAHVGSASASAPLSARKVINVRAPSMGKVRSLEDQLARPVIPPVPTATQAAGSSSSSGSVATSTTTTTVASGGSSQQVATASATALPVSAVAITTPGVGGEAKLEQKSDQPAAIMQNQSQNQAPPPPPPPQQQQQQQLHQPQQLQPSPHQVKQTVQIVSKETSFISGPVAAKTLVTEATSKPAELLPPPPYEMATAPISNVTISISTKQAAPKELQMKPKAVAMSLPMEQGDESLPEQAEPPLHSEQGATAAGVAPHSGGPLVSAQWTNNHLEGGVATTKIPFKPGEPQKRKLPMHPQLDEKQIQQQAEIPISTSLPTTPTGQGTPDKVQLISAIATYVKKSGVPNEAQPIQNQSQGQVQMQAQMQATMQGHLSGQMSGQISGHAAGQIPAQMHLQVQHQLHMAVHPQQQQQQLHQNQPQNATIPLPVTGQGAVPIPVPTMESKAGDQRKRRKREVQKPRRTNLNAGQAGGALKDLTGPLPAGAMVQLAGMPPGTQYIQGAASGTGHVITSTGQGVTLGGVGASTGASSSPMLKKRVRKFSKVEEDHDAFTEKLLTHIRQMQPLQVLEPHLNRNFHFLIGSNETSGGGSPASMSSAASAGSSSAGGGKLKGGSRGWPLSRHLEGLEDCDGTVLGRYGRVNLPGIPSLYDSERFGGSRGLVGGSARTRSPSPAESPGAEKMLPMSSIQNDFYDQEFSTHMERNPRERLVRHIGAVKDCNLETVDLVESEGVAAWATLPRLTRYPGLILLNGNSRCHGRMSPVALPEDPLTMRFPVSPLLRSCGEELRKTQQMELGMGPLGNNNNNNYQQKNQNVILALPASASENIAGVLRDLANLLHLAPALTCKIIEDKIGNKLEDQFMNQDDEKHVDFKRPLSQVSHGHLRKILNGRRKLCRSCGNVVHATGLRVPRHSVPALEEQLPRLAQLMDMLPRKSVPPPFVYFCDRACFARFKWNGKDGQAEAASLLLQPAGGSAVKSSNGDSPGSFCASSTAPAEMVVKQEPEDEDEKTPSVPGNPTNIPAQRKCIVKCFSADCFTTDSAPSGLELDGTAGAGTGAGPVNNTVWETETSGLQLEDTRQCVFCNQRGDGQADGPSRLLNFDVDKWVHLNCALWSNGVYETVSGALMNFQTALQAGLSQACSACHQPGATIKCFKSRCNSLYHLPCAIREECVFYKNKSVHCSVHGHAHAGITMGAGAGATTGAGLGGSVADNELSSLVVHRRVFVDRDENRQVATVMHYSELSNLLRVGNMTFLNVGQLLPHQLEAFHTPHYIYPIGYKVSRYYWCVRRPNRRCRYICSIAEAGCKPEFRIQVQDAGDKEPEREFRGSSPSAVWQQILQPITRLRKVHKWLQLFPQHISGEDLFGLTEPAIVRILESLPGIETLTDYRFKYGRNPLLEFPLAINPSGAARTEPKQRQLLVWRKPHTQRTAGSCSTQRMANSAAIAGEVACPYSKQFVHSKSSQYKKMKQEWRNNVYLARSKIQGLGLYAARDIEKHTMIIEYIGEVIRTEVSEIREKQYESKNRGIYMFRLDEDRVVDATLSGGLARYINHSCNPNCVTEIVEVDRDVRIIIFAKRKIYRGEELSYDYKFDIEDESHKIPCACGAPNCRKWMN.

Disordered regions lie at residues 34-78 (LQKR…STAP), 135-201 (DADK…ENSG), 213-235 (ASGA…AGTP), and 759-789 (QSAN…TPMN). Residues 142–165 (YRISTPRNSQSNPLLHRNTAFTSF) are compositionally biased toward polar residues. Low complexity-rich tracts occupy residues 171-183 (ASSS…STAS), 218-235 (SSTS…AGTP), and 767-787 (ATST…NATP). Positions 801–805 (LKQLL) match the LXXLL motif 1 motif. 5 disordered regions span residues 863 to 895 (PVPT…GGSS), 918 to 973 (VGGE…QVKQ), 1226 to 1292 (HPQQ…AGGA), 1404 to 1433 (TSGG…KGGS), and 1478 to 1500 (GLVG…AEKM). Composition is skewed to low complexity over residues 866 to 895 (TATQ…GGSS), 952 to 970 (QQQQ…SPHQ), and 1226 to 1241 (HPQQ…QPQN). The segment covering 1269-1281 (RKRRKREVQKPRR) has biased composition (basic residues). Residues 1410-1422 (PASMSSAASAGSS) are compositionally biased toward low complexity. The span at 1423–1433 (SAGGGKLKGGS) shows a compositional bias: gly residues. Threonine 1486 carries the phosphothreonine modification. Serine 1488 and serine 1490 each carry phosphoserine. Residues 1652 to 1656 (LANLL) carry the LXXLL motif 2 motif. The disordered stretch occupies residues 1790-1836 (GGSAVKSSNGDSPGSFCASSTAPAEMVVKQEPEDEDEKTPSVPGNPT). Residues 1794–1811 (VKSSNGDSPGSFCASSTA) are compositionally biased toward polar residues. Residues 1895-1935 (TRQCVFCNQRGDGQADGPSRLLNFDVDKWVHLNCALWSNGV) form a C2HC pre-PHD-type zinc finger. The PHD-type zinc-finger motif lies at 1956–2003 (QACSACHQPGATIKCFKSRCNSLYHLPCAIREECVFYKNKSVHCSVHG). An LXXLL motif 3 motif is present at residues 2060-2064 (LSNLL). The 61-residue stretch at 2061–2121 (SNLLRVGNMT…CRYICSIAEA (61 aa)) folds into the FYR N-terminal domain. The FYR C-terminal domain occupies 2122–2209 (GCKPEFRIQV…ETLTDYRFKY (88 aa)). Residues 2291–2407 (NNVYLARSKI…RGEELSYDYK (117 aa)) enclose the SET domain. In terms of domain architecture, Post-SET spans 2415–2431 (HKIPCACGAPNCRKWMN).

It belongs to the class V-like SAM-binding methyltransferase superfamily. Histone-lysine methyltransferase family. TRX/MLL subfamily. Component of the MLL3/4 complex composed at least of the catalytic subunit trr, ash2, Rbbp5, Dpy-30L1, wds, hcf, ptip, Pa1, Utx, Lpt and Ncoa6. Interacts with nuclear receptor EcR in an ecdysone-dependent manner. Interacts with ash2; the interaction stabilizes trr. As to expression, widely expressed.

It is found in the nucleus. It localises to the chromosome. It catalyses the reaction L-lysyl(4)-[histone H3] + 3 S-adenosyl-L-methionine = N(6),N(6),N(6)-trimethyl-L-lysyl(4)-[histone H3] + 3 S-adenosyl-L-homocysteine + 3 H(+). In terms of biological role, histone methyltransferase that acts as a coactivator for the ecdysone receptor during development. Specifically trimethylates 'Lys-4' of histone H3, a specific tag for epigenetic transcriptional activation. Recruited by EcR in an ecdysone-dependent manner causing H3 'Lys-4' trimethylation at ecdysone-inducible promoters, leading to activate expression. Plays a central role in the developing compound eye, during the progression of the morphogenetic furrow and in post-furrow differentiation of the retinal epithelium, notably by activating expression of hh. Also required for wing and abdominal development. The polypeptide is Histone-lysine N-methyltransferase trr (trr) (Drosophila melanogaster (Fruit fly)).